Reading from the N-terminus, the 287-residue chain is Lycopene elongase/hydratase (287 aa).

7 helical membrane-spanning segments follow: residues 15–35 (ISWI…AGEI), 37–57 (WLFW…MYGI), 87–107 (TLLW…FIFG), 137–157 (FIDA…GATI), 166–186 (MWIA…LGAV), 218–238 (LLAA…GIAI), and 265–285 (VFLW…IAIH).

It belongs to the UbiA prenyltransferase family.

Its subcellular location is the cell membrane. It carries out the reaction all-trans-lycopene + dimethylallyl diphosphate + A + H2O = nonaflavuxanthin + AH2 + diphosphate. It catalyses the reaction nonaflavuxanthin + dimethylallyl diphosphate + A + H2O = flavuxanthin + AH2 + diphosphate. It participates in carotenoid biosynthesis. Catalyzes the elongation of the C(40) carotenoid all-trans-lycopene to the acyclic C(50) carotenoid flavuxanthin during decaprenoxanthin biosynthesis. Acts as a bifunctional enzyme that catalyzes the elongation of lycopene by attaching a C(5) isoprene unit at C-2, as well as the hydroxylation of the new isoprene unit. The enzyme acts at both ends of the substrate, forming the C(50) carotenoid flavuxanthin via the C(45) intermediate nonaflavuxanthin. The sequence is that of Lycopene elongase/hydratase from Corynebacterium glutamicum (strain ATCC 13032 / DSM 20300 / JCM 1318 / BCRC 11384 / CCUG 27702 / LMG 3730 / NBRC 12168 / NCIMB 10025 / NRRL B-2784 / 534).